Consider the following 255-residue polypeptide: Acetylglutamate kinase (255 aa).

Residues 40–41, Arg-62, and Asn-157 each bind substrate; that span reads GG.

This sequence belongs to the acetylglutamate kinase family. ArgB subfamily.

It is found in the cytoplasm. It carries out the reaction N-acetyl-L-glutamate + ATP = N-acetyl-L-glutamyl 5-phosphate + ADP. Its pathway is amino-acid biosynthesis; L-arginine biosynthesis; N(2)-acetyl-L-ornithine from L-glutamate: step 2/4. Catalyzes the ATP-dependent phosphorylation of N-acetyl-L-glutamate. The sequence is that of Acetylglutamate kinase from Parabacteroides distasonis (strain ATCC 8503 / DSM 20701 / CIP 104284 / JCM 5825 / NCTC 11152).